A 238-amino-acid polypeptide reads, in one-letter code: Phosphoribosylaminoimidazole-succinocarboxamide synthase (238 aa).

This sequence belongs to the SAICAR synthetase family.

The enzyme catalyses 5-amino-1-(5-phospho-D-ribosyl)imidazole-4-carboxylate + L-aspartate + ATP = (2S)-2-[5-amino-1-(5-phospho-beta-D-ribosyl)imidazole-4-carboxamido]succinate + ADP + phosphate + 2 H(+). It functions in the pathway purine metabolism; IMP biosynthesis via de novo pathway; 5-amino-1-(5-phospho-D-ribosyl)imidazole-4-carboxamide from 5-amino-1-(5-phospho-D-ribosyl)imidazole-4-carboxylate: step 1/2. This chain is Phosphoribosylaminoimidazole-succinocarboxamide synthase, found in Desulfitobacterium hafniense (strain DSM 10664 / DCB-2).